The following is a 65-amino-acid chain: Cold shock-like protein CspC (65 aa).

Residues 3–62 enclose the CSD domain; sequence GRVKWFNAEKGFGFIEREDGDDVFVHFSAIQQDGYKSLEEGQQVEFDIVDGARGPQAANV.

As to quaternary structure, homodimer.

It is found in the cytoplasm. This is Cold shock-like protein CspC (cspC) from Bacillus cereus.